A 35-amino-acid chain; its full sequence is Toxin Ado1 (35 aa).

3 disulfide bridges follow: Cys5/Cys20, Cys12/Cys25, and Cys19/Cys32.

It is found in the secreted. Binds reversibly and blocks P/Q-type voltage-gated calcium channels (Cav). The polypeptide is Toxin Ado1 (Agriosphodrus dohrni (Japanese assassin-bug)).